Consider the following 90-residue polypeptide: Probable Fe(2+)-trafficking protein (90 aa).

The protein belongs to the Fe(2+)-trafficking protein family.

Could be a mediator in iron transactions between iron acquisition and iron-requiring processes, such as synthesis and/or repair of Fe-S clusters in biosynthetic enzymes. This Pseudomonas fluorescens (strain SBW25) protein is Probable Fe(2+)-trafficking protein.